Consider the following 180-residue polypeptide: NADH-quinone oxidoreductase subunit I (180 aa).

4Fe-4S ferredoxin-type domains lie at 50–80 and 90–119; these read LTRD…LQKA and EFFR…LTPD. [4Fe-4S] cluster-binding residues include Cys60, Cys63, Cys66, Cys70, Cys99, Cys102, Cys105, and Cys109.

The protein belongs to the complex I 23 kDa subunit family. NDH-1 is composed of 13 different subunits. Subunits NuoA, H, J, K, L, M, N constitute the membrane sector of the complex. The cofactor is [4Fe-4S] cluster.

It localises to the cell inner membrane. It carries out the reaction a quinone + NADH + 5 H(+)(in) = a quinol + NAD(+) + 4 H(+)(out). NDH-1 shuttles electrons from NADH, via FMN and iron-sulfur (Fe-S) centers, to quinones in the respiratory chain. The immediate electron acceptor for the enzyme in this species is believed to be ubiquinone. Couples the redox reaction to proton translocation (for every two electrons transferred, four hydrogen ions are translocated across the cytoplasmic membrane), and thus conserves the redox energy in a proton gradient. This Shigella boydii serotype 4 (strain Sb227) protein is NADH-quinone oxidoreductase subunit I.